The sequence spans 449 residues: Bifunctional protein GlmU (449 aa).

The tract at residues 1–231 is pyrophosphorylase; that stretch reads MVRNCLSIVL…FDNVIGINNC (231 aa). Residues 10 to 13, lysine 24, glutamine 77, and 82 to 83 each bind UDP-N-acetyl-alpha-D-glucosamine; these read LAAG and GT. Aspartate 107 contributes to the Mg(2+) binding site. Glycine 143, glutamate 157, asparagine 172, and asparagine 229 together coordinate UDP-N-acetyl-alpha-D-glucosamine. A Mg(2+)-binding site is contributed by asparagine 229. Positions 232-252 are linker; that stretch reads FELFEADALWQKRKARDLMLS. Positions 253 to 449 are N-acetyltransferase; that stretch reads GVTILKPESV…AHLSKNKRNK (197 aa). Arginine 318 and lysine 336 together coordinate UDP-N-acetyl-alpha-D-glucosamine. The active-site Proton acceptor is the histidine 348. 2 residues coordinate UDP-N-acetyl-alpha-D-glucosamine: tyrosine 351 and asparagine 362. Residues alanine 365, 371–372, serine 390, serine 408, and arginine 425 each bind acetyl-CoA; that span reads NY.

This sequence in the N-terminal section; belongs to the N-acetylglucosamine-1-phosphate uridyltransferase family. In the C-terminal section; belongs to the transferase hexapeptide repeat family. As to quaternary structure, homotrimer. The cofactor is Mg(2+).

Its subcellular location is the cytoplasm. The enzyme catalyses alpha-D-glucosamine 1-phosphate + acetyl-CoA = N-acetyl-alpha-D-glucosamine 1-phosphate + CoA + H(+). The catalysed reaction is N-acetyl-alpha-D-glucosamine 1-phosphate + UTP + H(+) = UDP-N-acetyl-alpha-D-glucosamine + diphosphate. The protein operates within nucleotide-sugar biosynthesis; UDP-N-acetyl-alpha-D-glucosamine biosynthesis; N-acetyl-alpha-D-glucosamine 1-phosphate from alpha-D-glucosamine 6-phosphate (route II): step 2/2. It participates in nucleotide-sugar biosynthesis; UDP-N-acetyl-alpha-D-glucosamine biosynthesis; UDP-N-acetyl-alpha-D-glucosamine from N-acetyl-alpha-D-glucosamine 1-phosphate: step 1/1. Its pathway is bacterial outer membrane biogenesis; LPS lipid A biosynthesis. Functionally, catalyzes the last two sequential reactions in the de novo biosynthetic pathway for UDP-N-acetylglucosamine (UDP-GlcNAc). The C-terminal domain catalyzes the transfer of acetyl group from acetyl coenzyme A to glucosamine-1-phosphate (GlcN-1-P) to produce N-acetylglucosamine-1-phosphate (GlcNAc-1-P), which is converted into UDP-GlcNAc by the transfer of uridine 5-monophosphate (from uridine 5-triphosphate), a reaction catalyzed by the N-terminal domain. In Bartonella bacilliformis (strain ATCC 35685 / KC583 / Herrer 020/F12,63), this protein is Bifunctional protein GlmU.